Here is a 155-residue protein sequence, read N- to C-terminus: Ciliary microtubule inner protein 2C (155 aa).

It belongs to the CIMIP2 family.

The protein resides in the cytoplasm. It is found in the cytoskeleton. Its subcellular location is the cilium axoneme. Functionally, microtubule inner protein (MIP) part of the dynein-decorated doublet microtubules (DMTs) in cilia axoneme, which is required for motile cilia beating. In Xenopus laevis (African clawed frog), this protein is Ciliary microtubule inner protein 2C (cimip2cb).